Reading from the N-terminus, the 195-residue chain is Probable nicotinate-nucleotide adenylyltransferase (195 aa).

The protein belongs to the NadD family.

It carries out the reaction nicotinate beta-D-ribonucleotide + ATP + H(+) = deamido-NAD(+) + diphosphate. It functions in the pathway cofactor biosynthesis; NAD(+) biosynthesis; deamido-NAD(+) from nicotinate D-ribonucleotide: step 1/1. Its function is as follows. Catalyzes the reversible adenylation of nicotinate mononucleotide (NaMN) to nicotinic acid adenine dinucleotide (NaAD). This chain is Probable nicotinate-nucleotide adenylyltransferase, found in Gluconobacter oxydans (strain 621H) (Gluconobacter suboxydans).